The following is an 856-amino-acid chain: Villin-like protein (856 aa).

Gelsolin-like repeat units lie at residues 22-74 (RKMV…EAQG), 146-186 (VSAT…SEKA), 263-307 (LVVL…QERK), 401-450 (LHRQ…DEIE), 521-561 (TRTM…DQRE), and 624-665 (LVLA…WKEA). The segment at 762–796 (SQDSSENDLVRSPKSAGSRTSSSVSSTSATINGGL) is disordered. Positions 776 to 791 (SAGSRTSSSVSSTSAT) are enriched in low complexity. One can recognise an HP domain in the interval 790–856 (ATINGGLRRE…RQEKKQLGFF (67 aa)).

It belongs to the villin/gelsolin family. Ubiquitously expressed in 16 tissues examined.

Possible tumor suppressor. This chain is Villin-like protein (VILL), found in Homo sapiens (Human).